A 360-amino-acid chain; its full sequence is Photosystem II protein D1 (360 aa).

The next 3 membrane-spanning stretches (helical) occupy residues 29-46 (YIGW…TATS), 118-133 (HFLL…EWEL), and 142-156 (WISV…AAAA). Chlorophyll a is bound at residue histidine 118. Tyrosine 126 contacts pheophytin a. Residues aspartate 170 and glutamate 189 each coordinate [CaMn4O5] cluster. A helical membrane pass occupies residues 197 to 218 (FHQLGVAGVFGGSLFSAMHGSL). Histidine 198 lines the chlorophyll a pocket. A quinone is bound by residues histidine 215 and 264–265 (SF). Histidine 215 is a binding site for Fe cation. Histidine 272 is a binding site for Fe cation. A helical transmembrane segment spans residues 274 to 288 (FLGLWPVVGIWFTAM). 4 residues coordinate [CaMn4O5] cluster: histidine 332, glutamate 333, aspartate 342, and alanine 344. Positions 345–360 (SSNSLPVSLVAPSVNG) are excised as a propeptide.

This sequence belongs to the reaction center PufL/M/PsbA/D family. PSII is composed of 1 copy each of membrane proteins PsbA, PsbB, PsbC, PsbD, PsbE, PsbF, PsbH, PsbI, PsbJ, PsbK, PsbL, PsbM, PsbT, PsbX, PsbY, PsbZ, Psb30/Ycf12, at least 3 peripheral proteins of the oxygen-evolving complex and a large number of cofactors. It forms dimeric complexes. The cofactor is The D1/D2 heterodimer binds P680, chlorophylls that are the primary electron donor of PSII, and subsequent electron acceptors. It shares a non-heme iron and each subunit binds pheophytin, quinone, additional chlorophylls, carotenoids and lipids. D1 provides most of the ligands for the Mn4-Ca-O5 cluster of the oxygen-evolving complex (OEC). There is also a Cl(-1) ion associated with D1 and D2, which is required for oxygen evolution. The PSII complex binds additional chlorophylls, carotenoids and specific lipids.. Tyr-161 forms a radical intermediate that is referred to as redox-active TyrZ, YZ or Y-Z. Post-translationally, C-terminally processed by CTPA; processing is essential to allow assembly of the oxygen-evolving complex and thus photosynthetic growth.

It is found in the plastid. The protein resides in the chloroplast thylakoid membrane. It catalyses the reaction 2 a plastoquinone + 4 hnu + 2 H2O = 2 a plastoquinol + O2. Photosystem II (PSII) is a light-driven water:plastoquinone oxidoreductase that uses light energy to abstract electrons from H(2)O, generating O(2) and a proton gradient subsequently used for ATP formation. It consists of a core antenna complex that captures photons, and an electron transfer chain that converts photonic excitation into a charge separation. The D1/D2 (PsbA/PsbD) reaction center heterodimer binds P680, the primary electron donor of PSII as well as several subsequent electron acceptors. The sequence is that of Photosystem II protein D1 from Gracilaria tenuistipitata var. liui (Red alga).